A 78-amino-acid polypeptide reads, in one-letter code: UPF0235 protein AF_2072 (78 aa).

This sequence belongs to the UPF0235 family.

This is UPF0235 protein AF_2072 from Archaeoglobus fulgidus (strain ATCC 49558 / DSM 4304 / JCM 9628 / NBRC 100126 / VC-16).